Consider the following 393-residue polypeptide: Serine/threonine-protein kinase US3 homolog (393 aa).

The region spanning 93-378 (FVILKTFTPG…AEVLLNHSVF (286 aa)) is the Protein kinase domain. ATP contacts are provided by residues 99–107 (FTPGAEGFA) and K122. D206 functions as the Proton acceptor in the catalytic mechanism.

Belongs to the protein kinase superfamily. Ser/Thr protein kinase family. Phosphorylated by ORF47; this phosphorylation regulates subsequent phosphorylation of proteins 24 and 27 by ORF66. Autophosphorylated.

It localises to the host cytoplasm. It is found in the host nucleus. It carries out the reaction L-seryl-[protein] + ATP = O-phospho-L-seryl-[protein] + ADP + H(+). The catalysed reaction is L-threonyl-[protein] + ATP = O-phospho-L-threonyl-[protein] + ADP + H(+). Its function is as follows. Multifunctional serine/threonine kinase that plays a role in several processes including egress of virus particles from the nucleus, modulation of the actin cytoskeleton and inhibition of apoptosis. Phosphorylates proteins 24 and 27, two critical regulators of capsid budding from nucleus to endoplasmic reticulum, thereby facilitating virion egress. Modulates and redistributes host components of the nuclear envelope, including LMNA, emerin/EMD and the nuclear matrix protein MATR3. Phosphorylates envelope glycoprotein B (gB), probably to direct it to the cell surface. Promotes virus intracellular spread by restructuring host cell cytoskeleton. Blocks host apoptosis to extend cell survival and allow efficient viral replication. Promotes viral gene expression by phosphorylating host HDAC2 to reduce viral genome silencing. Down-regulates class I major histocompatibility complex (MHC-I) surface expression. Additionally, phosphorylates IE62 and targets it to the cytoplasm. The nuclear exclusion of IE62 enables the packaging of abundant levels of IE62 into virions. This chain is Serine/threonine-protein kinase US3 homolog (66), found in Varicella-zoster virus (strain Dumas) (HHV-3).